The primary structure comprises 39 residues: U1-nemetoxin-Csp1c (39 aa).

4 disulfide bridges follow: Cys-1/Cys-15, Cys-8/Cys-19, Cys-14/Cys-36, and Cys-25/Cys-32.

As to expression, expressed by the venom gland.

It localises to the secreted. Functionally, causes paralysis to insect larvae (H.virescens). This toxin is active only on insects. In Calisoga sp. (Spider), this protein is U1-nemetoxin-Csp1c.